Consider the following 587-residue polypeptide: Kelch-like protein 3 (587 aa).

Positions 1-24 (MEGESVKPSPQPTAQAEDEEKNRR) are disordered. The BTB domain occupies 50–117 (CDVMIVAEDV…IYTAEIEVTE (68 aa)). The BACK domain occupies 152–254 (CLGIRAFADV…PRDYLVQTVE (103 aa)). At T295 the chain carries Phosphothreonine. Kelch repeat units lie at residues 302–347 (VMIV…FMAG), 348–394 (HVYA…VLND), 396–441 (LYAV…VVEG), 442–490 (KLYA…VLSG), 491–537 (QLYA…AVNG), and 539–585 (LYVV…VIHK). Phosphothreonine is present on T375. S376 and S433 each carry phosphoserine.

The protein belongs to the KLHL3 family. In terms of assembly, homodimer. Component of the BCR(KLHL3) E3 ubiquitin ligase complex, at least composed of CUL3 and KLHL3 and RBX1. Interacts with CLDN8. Phosphorylation at Ser-433 by PKA or PKC decreases the interaction with WNK1 and WNK4, leading to inhibit their degradation by the BCR(KLHL3) complex. Phosphorylated at Ser-433 by PKC in response to angiotensin II signaling, decreasing ability to promote degradation of WNK1 and WNK4, leading to activation of Na-Cl cotransporter SLC12A3/NCC. Phosphorylation at Ser-433 is increased by insulin. Dephosphorylated at Ser-433 by calcineurin PPP3CA, promoting degradation of WNK1 and WNK4. Present at high level in brain and kidney (at protein level). Weakly expressed in other tissues. In kidney, predominantly localizes to the distal convoluted tubule (DCT) and collecting duct, with apical localization in the DCT (at protein level).

It is found in the cytoplasm. The protein resides in the cytosol. It localises to the cytoskeleton. Its pathway is protein modification; protein ubiquitination. Substrate-specific adapter of a BCR (BTB-CUL3-RBX1) E3 ubiquitin ligase complex that acts as a regulator of ion transport in the distal nephron. The BCR(KLHL3) complex acts by mediating ubiquitination and degradation of WNK1 and WNK4, two activators of Na-Cl cotransporter SLC12A3/NCC in distal convoluted tubule cells of kidney, thereby regulating NaCl reabsorption. The BCR(KLHL3) complex also mediates ubiquitination of CLDN8, a tight-junction protein required for paracellular chloride transport in the kidney, leading to its degradation. This is Kelch-like protein 3 from Mus musculus (Mouse).